A 127-amino-acid chain; its full sequence is MARITAEDCNKIIPDRFRLVVLATRYAKLLNYKVETNQIKKEKRDKPPVISLRRIAAGKVSVPQLEQDLINSLRTRMMIEPLINQDESEDVEEKFEYLPEVYIGEDYSDLDDQIFINENGEDYETDK.

It belongs to the RNA polymerase subunit omega family. In terms of assembly, the RNAP catalytic core consists of 2 alpha, 1 beta, 1 beta' and 1 omega subunit. When a sigma factor is associated with the core the holoenzyme is formed, which can initiate transcription.

It carries out the reaction RNA(n) + a ribonucleoside 5'-triphosphate = RNA(n+1) + diphosphate. Promotes RNA polymerase assembly. Latches the N- and C-terminal regions of the beta' subunit thereby facilitating its interaction with the beta and alpha subunits. This is DNA-directed RNA polymerase subunit omega (rpoZ) from Rickettsia prowazekii (strain Madrid E).